A 655-amino-acid chain; its full sequence is p-hydroxybenzoic acid efflux pump subunit AaeB (655 aa).

Helical transmembrane passes span F13–L33, W38–P58, L69–I89, L93–V113, W121–L141, E152–V172, L370–V390, F407–P427, Q431–V451, M459–F479, and F482–L502.

This sequence belongs to the aromatic acid exporter ArAE (TC 2.A.85) family.

The protein resides in the cell inner membrane. Its function is as follows. Forms an efflux pump with AaeA. Could function as a metabolic relief valve, allowing to eliminate certain compounds when they accumulate to high levels in the cell. The sequence is that of p-hydroxybenzoic acid efflux pump subunit AaeB from Citrobacter koseri (strain ATCC BAA-895 / CDC 4225-83 / SGSC4696).